The following is a 594-amino-acid chain: Spermidine/putrescine import ATP-binding protein PotA (594 aa).

One can recognise an ABC transporter domain in the interval 24–435 (IEIKKINKTY…PANNWVANFI (412 aa)). An ATP-binding site is contributed by 57 to 64 (GPSGCGKT). Positions 125–304 (RKPIENVSAD…EWFDKKKLTR (180 aa)) are insert.

This sequence belongs to the ABC transporter superfamily. Spermidine/putrescine importer (TC 3.A.1.11.1) family. The complex is composed of two ATP-binding proteins (PotA), two transmembrane proteins (PotB and PotC) and a solute-binding protein (PotD).

The protein localises to the cell membrane. It catalyses the reaction ATP + H2O + polyamine-[polyamine-binding protein]Side 1 = ADP + phosphate + polyamineSide 2 + [polyamine-binding protein]Side 1.. Part of the ABC transporter complex PotABCD involved in spermidine/putrescine import. Responsible for energy coupling to the transport system. The sequence is that of Spermidine/putrescine import ATP-binding protein PotA from Malacoplasma penetrans (strain HF-2) (Mycoplasma penetrans).